The sequence spans 329 residues: Transcription factor TGA2.3 (329 aa).

A disordered region spans residues 1-48 (MADMSPRTDTSTDDTDDNHMLEPGQLALAAASDSDRSKDKHEDQKTLR). Over residues 33-46 (DSDRSKDKHEDQKT) the composition is skewed to basic and acidic residues. A bZIP domain is found at 43–87 (DQKTLRRLAQNREAARKSRLRKKAYVQQLENSRLKLTQLEQELQR). The basic motif stretch occupies residues 45 to 65 (KTLRRLAQNREAARKSRLRKK). The tract at residues 71-85 (LENSRLKLTQLEQEL) is leucine-zipper. Positions 110–326 (ALAFDMEYAR…RALSSLWLAR (217 aa)) constitute a DOG1 domain.

This sequence belongs to the bZIP family. In terms of assembly, interacts with NPR1/NH1 and NPR3/NH3.

The protein localises to the nucleus. Its function is as follows. Transcriptional regulator involved in defense response. This chain is Transcription factor TGA2.3, found in Oryza sativa subsp. japonica (Rice).